A 264-amino-acid polypeptide reads, in one-letter code: 5'-nucleotidase SurE (264 aa).

A divalent metal cation contacts are provided by Asp-9, Asp-10, Ser-40, and Asn-95.

This sequence belongs to the SurE nucleotidase family. It depends on a divalent metal cation as a cofactor.

Its subcellular location is the cytoplasm. The catalysed reaction is a ribonucleoside 5'-phosphate + H2O = a ribonucleoside + phosphate. Functionally, nucleotidase that shows phosphatase activity on nucleoside 5'-monophosphates. This chain is 5'-nucleotidase SurE, found in Helicobacter hepaticus (strain ATCC 51449 / 3B1).